A 105-amino-acid chain; its full sequence is Heat shock protein HspQ (105 aa).

Residues 74–105 form a disordered region; sequence SSETQDEHPEQPSMDELARTIRKQLQAPRLRN.

The protein belongs to the HspQ family.

Its subcellular location is the cytoplasm. Involved in the degradation of certain denaturated proteins, including DnaA, during heat shock stress. The polypeptide is Heat shock protein HspQ (Citrobacter koseri (strain ATCC BAA-895 / CDC 4225-83 / SGSC4696)).